The primary structure comprises 240 residues: FMN-dependent NADH:quinone oxidoreductase 2 (240 aa).

FMN is bound by residues Ser10 and 23–25 (SIS).

Belongs to the azoreductase type 1 family. As to quaternary structure, homodimer. FMN is required as a cofactor.

It carries out the reaction 2 a quinone + NADH + H(+) = 2 a 1,4-benzosemiquinone + NAD(+). It catalyses the reaction N,N-dimethyl-1,4-phenylenediamine + anthranilate + 2 NAD(+) = 2-(4-dimethylaminophenyl)diazenylbenzoate + 2 NADH + 2 H(+). Its function is as follows. Quinone reductase that provides resistance to thiol-specific stress caused by electrophilic quinones. Functionally, also exhibits azoreductase activity. Catalyzes the reductive cleavage of the azo bond in aromatic azo compounds to the corresponding amines. This chain is FMN-dependent NADH:quinone oxidoreductase 2, found in Idiomarina loihiensis (strain ATCC BAA-735 / DSM 15497 / L2-TR).